A 121-amino-acid polypeptide reads, in one-letter code: Large ribosomal subunit protein eL34B (121 aa).

The protein belongs to the eukaryotic ribosomal protein eL34 family. As to quaternary structure, component of the large ribosomal subunit (LSU). Mature yeast ribosomes consist of a small (40S) and a large (60S) subunit. The 40S small subunit contains 1 molecule of ribosomal RNA (18S rRNA) and 33 different proteins (encoded by 57 genes). The large 60S subunit contains 3 rRNA molecules (25S, 5.8S and 5S rRNA) and 46 different proteins (encoded by 81 genes).

It localises to the cytoplasm. Its function is as follows. Component of the ribosome, a large ribonucleoprotein complex responsible for the synthesis of proteins in the cell. The small ribosomal subunit (SSU) binds messenger RNAs (mRNAs) and translates the encoded message by selecting cognate aminoacyl-transfer RNA (tRNA) molecules. The large subunit (LSU) contains the ribosomal catalytic site termed the peptidyl transferase center (PTC), which catalyzes the formation of peptide bonds, thereby polymerizing the amino acids delivered by tRNAs into a polypeptide chain. The nascent polypeptides leave the ribosome through a tunnel in the LSU and interact with protein factors that function in enzymatic processing, targeting, and the membrane insertion of nascent chains at the exit of the ribosomal tunnel. The protein is Large ribosomal subunit protein eL34B of Saccharomyces cerevisiae (strain ATCC 204508 / S288c) (Baker's yeast).